Consider the following 384-residue polypeptide: Na(+)/H(+) antiporter NhaA (384 aa).

A run of 11 helical transmembrane segments spans residues 7-27, 58-78, 94-114, 124-144, 153-173, 179-199, 204-224, 256-276, 285-305, 325-345, and 357-377; these read FYNLETIGGILLFIAAVLAII, LLLWINDGLMAIYFLLIGLEI, LVPALTALAGLLFPALIFIFF, GWAIPTATDIAFTLGIVSLLG, ILLTAIAIFDDIAAIVIIALF, SLLSLSLALVFTLILIGLNYF, ISVFMLFGVALWIAVLKSGVH, VVFLILPLFAFANAGVSFVGL, VVLGIGLGLFLGKQLGIFLSL, VYGIALICGVGFTMSLFIGSL, and MVKIGVVFGSFIAGLTGFLVL.

Belongs to the NhaA Na(+)/H(+) (TC 2.A.33) antiporter family.

It localises to the cell inner membrane. The catalysed reaction is Na(+)(in) + 2 H(+)(out) = Na(+)(out) + 2 H(+)(in). In terms of biological role, na(+)/H(+) antiporter that extrudes sodium in exchange for external protons. This Legionella pneumophila (strain Corby) protein is Na(+)/H(+) antiporter NhaA.